The chain runs to 230 residues: Potassium/proton antiporter CemA (230 aa).

4 helical membrane-spanning segments follow: residues 7 to 27 (LPSLLYLVFIVLLPWGVSSSF), 106 to 126 (IILHFSTNIICLAILSGSFFL), 145 to 165 (LNDSIKAFFILLVTDFFVGFH), and 181 to 201 (FGWAPNELIFTIFVCSFPVIL).

It belongs to the CemA family.

Its subcellular location is the plastid. The protein resides in the chloroplast inner membrane. The catalysed reaction is K(+)(in) + H(+)(out) = K(+)(out) + H(+)(in). Functionally, contributes to K(+)/H(+) antiport activity by supporting proton efflux to control proton extrusion and homeostasis in chloroplasts in a light-dependent manner to modulate photosynthesis. Prevents excessive induction of non-photochemical quenching (NPQ) under continuous-light conditions. Indirectly promotes efficient inorganic carbon uptake into chloroplasts. The sequence is that of Potassium/proton antiporter CemA from Hordeum vulgare (Barley).